Consider the following 345-residue polypeptide: Probable RuBisCO transcriptional regulator (345 aa).

One can recognise an HTH lysR-type domain in the interval 6-63; that stretch reads FTLDQLRILKAIASEGSFKRAADTLYVSQPAVSLQVQNLEKQLSVPLFDRGGRKAQLT. Positions 23–42 form a DNA-binding region, H-T-H motif; that stretch reads FKRAADTLYVSQPAVSLQVQ. A disordered region spans residues 311 to 345; it reads LDPERLFANPYSSNNGDRQGDGKDGKGSIEIDSVT. A compositionally biased stretch (basic and acidic residues) spans 328 to 339; it reads RQGDGKDGKGSI.

The protein belongs to the LysR transcriptional regulatory family.

In terms of biological role, trans-acting transcriptional regulator of RuBisCO genes (rbcL and rbcS) expression. The chain is Probable RuBisCO transcriptional regulator (rbcR) from Synechocystis sp. (strain ATCC 27184 / PCC 6803 / Kazusa).